A 197-amino-acid polypeptide reads, in one-letter code: Guanylyl cyclase-activating protein 2 (197 aa).

The N-myristoyl glycine moiety is linked to residue Gly2. EF-hand domains are found at residues 15–50, 51–86, 87–122, and 138–173; these read DVAELQEWYKKFVVECPSGTLFMHEFKRFFGVQDNQ, EAADYVEHMFRAFDKNGDNTIDFLEYVAALNLVLRG, KLEHKLKWTFKVYDRDGNGCIDKTELLEIVESIYNL, and SPEQVVDRIFQLVDENGDGQLSLDEFIDGARKDKWV. The Ca(2+) site is built by Asp64, Asn66, Asp68, Thr70, Glu75, Asp100, Asp102, Asn104, Cys106, Glu111, Asp151, Asn153, Asp155, Gln157, and Glu162.

In terms of tissue distribution, low expression in retina.

In terms of biological role, stimulates guanylyl cyclase 1 (GC1) and GC2 when free calcium ions concentration is low and inhibits guanylyl cyclases when free calcium ions concentration is elevated. This Ca(2+)-sensitive regulation of guanylyl cyclase (GC) is a key event in recovery of the dark state of rod photoreceptors following light exposure. The sequence is that of Guanylyl cyclase-activating protein 2 (GUCA1B) from Lithobates pipiens (Northern leopard frog).